A 1064-amino-acid polypeptide reads, in one-letter code: Probable ATP-dependent DNA helicase CHR23 (1064 aa).

Residues 398–563 form the Helicase ATP-binding domain; that stretch reads VSLYNNDYNG…WSLLNFLLPH (166 aa). 411–418 is a binding site for ATP; it reads DEMGLGKT. Positions 513–516 match the DEAH box motif; that stretch reads DEGH. The region spanning 699 to 866 is the Helicase C-terminal domain; sequence LLDRLLPKLK…DRREMLEEIM (168 aa). 2 disordered regions span residues 924 to 955 and 967 to 1064; these read AYTS…AVYS and MESE…SKRN. The span at 1002–1014 shows a compositional bias: acidic residues; sequence ESDEEKEEEEEER. Over residues 1048-1064 the composition is skewed to low complexity; that stretch reads SSPNSRGKGSSKGSKRN.

This sequence belongs to the helicase family. Expressed in embryos, root apical meristem (RAM) and shoot apical meristem (SAM).

The protein localises to the nucleus. It carries out the reaction ATP + H2O = ADP + phosphate + H(+). In terms of biological role, probable chromatin-remodeling factor that is functionally redundant with CHR12 in root and shoot stem cell initiation and root apical meristem (RAM) and shoot apical meristem (SAM) maintenance. Can associate with the promoter region of WOX5. May promote seed maturation and repress initiation of germination. May repress plant growth. In Arabidopsis thaliana (Mouse-ear cress), this protein is Probable ATP-dependent DNA helicase CHR23.